Consider the following 375-residue polypeptide: MSKRDYYEVLGVERGATEADLKKAYRRLAMKYHPDRNPGDKESEDKFKEANEAYEVLSDASKRAAFDQYGHAGVDPSMGGGGAGFGGANFSDIFGDVFSDFFGGGGRGGGRGGAQRGSDLRYTLELNLEEAVRGTTVSIRVPTLVNCQPCDGSGAKKGSTPSTCPTCGGIGQVRMQQGFFSVQQTCPRCHGQGKIITDPCTSCHGEGRVEEYKTLSVKVPAGVDTGDRIRLSGEGEAGTHGGPTGDLYVVISVREHEIFQRDGKHLYCEVPISYTDAALGGELEVPTLDGRVKLKIPEGTQTGKQFRLRGKGVAPVRGGGAGDLLCRVAVETPVNLSRRQRELLEELRDSLEGDSSHSPKASGWFDGVKRFFGDL.

Positions 5-70 constitute a J domain; it reads DYYEVLGVER…SKRAAFDQYG (66 aa). A CR-type zinc finger spans residues 134–212; sequence GTTVSIRVPT…CHGEGRVEEY (79 aa). Zn(2+) contacts are provided by Cys147, Cys150, Cys164, Cys167, Cys186, Cys189, Cys200, and Cys203. CXXCXGXG motif repeat units follow at residues 147–154, 164–171, 186–193, and 200–207; these read CQPCDGSG, CPTCGGIG, CPRCHGQG, and CTSCHGEG.

It belongs to the DnaJ family. In terms of assembly, homodimer. Requires Zn(2+) as cofactor.

It localises to the cytoplasm. Its function is as follows. Participates actively in the response to hyperosmotic and heat shock by preventing the aggregation of stress-denatured proteins and by disaggregating proteins, also in an autonomous, DnaK-independent fashion. Unfolded proteins bind initially to DnaJ; upon interaction with the DnaJ-bound protein, DnaK hydrolyzes its bound ATP, resulting in the formation of a stable complex. GrpE releases ADP from DnaK; ATP binding to DnaK triggers the release of the substrate protein, thus completing the reaction cycle. Several rounds of ATP-dependent interactions between DnaJ, DnaK and GrpE are required for fully efficient folding. Also involved, together with DnaK and GrpE, in the DNA replication of plasmids through activation of initiation proteins. This chain is Chaperone protein DnaJ, found in Pseudomonas putida (strain ATCC 47054 / DSM 6125 / CFBP 8728 / NCIMB 11950 / KT2440).